Reading from the N-terminus, the 742-residue chain is Kanadaptin (742 aa).

Polar residues predominate over residues 1–16 (MADILSQSETLASQDL). Residues 1–112 (MADILSQSET…PPWGGPATAP (112 aa)) form a disordered region. A compositionally biased stretch (low complexity) spans 27-43 (VSPAARSKAPASSSSNP). Residue serine 28 is modified to Phosphoserine. Positions 72–82 (GDFRSLQEEQS) are enriched in basic and acidic residues. Phosphoserine is present on serine 90. The segment covering 96–106 (RAPPYQEPPWG) has biased composition (pro residues). The FHA domain maps to 135–195 (CLFGRLSGCD…HGTFLNKTRI (61 aa)). Positions 254 to 282 (LGEDSDEEEEMDTSERKINAGSQDDEMGC) are disordered. The span at 256 to 265 (EDSDEEEEMD) shows a compositional bias: acidic residues. Phosphoserine occurs at positions 258 and 412. A Glycyl lysine isopeptide (Lys-Gly) (interchain with G-Cter in SUMO2) cross-link involves residue lysine 441. The stretch at 443-476 (ETFESLVAKLNDAERELSEISERLKASSQVLSES) forms a coiled coil. Phosphoserine is present on serine 476. A disordered region spans residues 565-742 (LKTGTVGKLP…RTHLNDKYGY (178 aa)). Residues 591-606 (PEVEEEEEEEEEEEKE) are compositionally biased toward acidic residues. A compositionally biased stretch (basic and acidic residues) spans 607–619 (KEEHEKKKLEDGS). A phosphoserine mark is found at serine 655 and serine 658. Low complexity predominate over residues 699–708 (PGPGKLPPTL). Residues 732–742 (GRTHLNDKYGY) show a composition bias toward basic and acidic residues.

In terms of tissue distribution, ubiquitously expressed.

The protein localises to the nucleus. It localises to the cytoplasm. The protein is Kanadaptin (SLC4A1AP) of Homo sapiens (Human).